A 508-amino-acid polypeptide reads, in one-letter code: MGLPWYRVHTVVLNDPGRLLSVHIMHTALVAGWAGSMALYELAVFDPSDPVLDPMWRQGMFVIPFMTRLGITNSWGGWSITGGTVTNPGIWSYEGVAGAHIVFSGLCFLAAIWHWVYWDLEIFCDERTGKPSLDLPKIFGIHLFLSGLACFGFGAFHVTGLYGPGIWVSDPYGLTGKVQPVNPAWGVEGFDPFVPGGIASHHIAAGTLGILAGLFHLSVRPPQRLYKGLRMGNIETVLSSSIAAVFFAAFVVAGTMWYGSATTPIELFGPTRYQWDQGYFQQEIYRRVSAGLAENQSLSEAWSKIPEKLAFYDYIGNNPAKGGLFRAGSMDNGDGIAVGWLGHPIFRDKEGRELFVRRMPTFFETFPVVLVDGDGIVRADVPFRRAESKYSVEQVGVTVAFYGGELNGVSYSDPTTVKKYARRAQLGEIFELDRATLKSDGVFRSSPRGWFTFGHASFALLFFFGHIWHGARTLFRDVFAGIDPDLDAQVEFGAFLKLGDPTTKRQAA.

The next 6 helical transmembrane spans lie at Ser-21–Ser-36, Ile-101–Trp-115, Gly-140–Phe-156, Ile-203–Ser-218, Val-237–Val-252, and Ser-457–Arg-472.

The protein belongs to the PsbB/PsbC family. PsbB subfamily. As to quaternary structure, PSII is composed of 1 copy each of membrane proteins PsbA, PsbB, PsbC, PsbD, PsbE, PsbF, PsbH, PsbI, PsbJ, PsbK, PsbL, PsbM, PsbT, PsbX, PsbY, PsbZ, Psb30/Ycf12, at least 3 peripheral proteins of the oxygen-evolving complex and a large number of cofactors. It forms dimeric complexes. Requires Binds multiple chlorophylls. PSII binds additional chlorophylls, carotenoids and specific lipids. as cofactor.

The protein resides in the plastid. It is found in the chloroplast thylakoid membrane. In terms of biological role, one of the components of the core complex of photosystem II (PSII). It binds chlorophyll and helps catalyze the primary light-induced photochemical processes of PSII. PSII is a light-driven water:plastoquinone oxidoreductase, using light energy to abstract electrons from H(2)O, generating O(2) and a proton gradient subsequently used for ATP formation. The sequence is that of Photosystem II CP47 reaction center protein from Ipomoea purpurea (Common morning glory).